The sequence spans 196 residues: Thymidine kinase (196 aa).

Residue 17–24 participates in ATP binding; it reads GPMFAGKT. E92 acts as the Proton acceptor in catalysis. Position 121 (F121) interacts with substrate. 2 residues coordinate Zn(2+): C146 and C149. 166–170 serves as a coordination point for substrate; that stretch reads LILAG. Zn(2+) is bound by residues C179 and C182.

Belongs to the thymidine kinase family.

It carries out the reaction thymidine + ATP = dTMP + ADP + H(+). Functionally, phosphorylates thymidine. ASFV replicates in the cytoplasm of infected cells and contains genes encoding a number of enzymes needed for DNA synthesis, including thymidine kinase. Important for growth in swine macrophages in vitro and is a virus virulence factor in swine. The polypeptide is Thymidine kinase (African swine fever virus (strain Badajoz 1971 Vero-adapted) (Ba71V)).